We begin with the raw amino-acid sequence, 511 residues long: Cytochrome P450 4B1 (511 aa).

Glu315 provides a ligand contact to heme. The residue at position 436 (Ser436) is a Phosphoserine. Heme is bound at residue Cys453.

This sequence belongs to the cytochrome P450 family. Heme serves as cofactor. Detected in the liver and lung (at protein level).

It localises to the endoplasmic reticulum membrane. Its subcellular location is the microsome membrane. The enzyme catalyses an organic molecule + reduced [NADPH--hemoprotein reductase] + O2 = an alcohol + oxidized [NADPH--hemoprotein reductase] + H2O + H(+). Functionally, cytochromes P450 are a group of heme-thiolate monooxygenases. In liver microsomes, this enzyme is involved in an NADPH-dependent electron transport pathway. It oxidizes a variety of structurally unrelated compounds, including steroids, fatty acids, and xenobiotics. The protein is Cytochrome P450 4B1 (CYP4B1) of Homo sapiens (Human).